A 361-amino-acid chain; its full sequence is tRNA/tmRNA (uracil-C(5))-methyltransferase (361 aa).

5 residues coordinate S-adenosyl-L-methionine: Gln183, Tyr211, Asn216, Glu232, and Asp294. Residue Cys319 is the Nucleophile of the active site. The active-site Proton acceptor is Glu353.

The protein belongs to the class I-like SAM-binding methyltransferase superfamily. RNA M5U methyltransferase family. TrmA subfamily.

The catalysed reaction is uridine(54) in tRNA + S-adenosyl-L-methionine = 5-methyluridine(54) in tRNA + S-adenosyl-L-homocysteine + H(+). It catalyses the reaction uridine(341) in tmRNA + S-adenosyl-L-methionine = 5-methyluridine(341) in tmRNA + S-adenosyl-L-homocysteine + H(+). In terms of biological role, dual-specificity methyltransferase that catalyzes the formation of 5-methyluridine at position 54 (m5U54) in all tRNAs, and that of position 341 (m5U341) in tmRNA (transfer-mRNA). The sequence is that of tRNA/tmRNA (uracil-C(5))-methyltransferase from Acinetobacter baylyi (strain ATCC 33305 / BD413 / ADP1).